The sequence spans 232 residues: Orotidine 5'-phosphate decarboxylase (232 aa).

Residues Asp11, Lys33, 60–69 (DLKLYDIPNT), Thr119, Arg180, Gln189, Gly209, and Arg210 contribute to the substrate site. Lys62 functions as the Proton donor in the catalytic mechanism.

The protein belongs to the OMP decarboxylase family. Type 1 subfamily. As to quaternary structure, homodimer.

The catalysed reaction is orotidine 5'-phosphate + H(+) = UMP + CO2. Its pathway is pyrimidine metabolism; UMP biosynthesis via de novo pathway; UMP from orotate: step 2/2. Its function is as follows. Catalyzes the decarboxylation of orotidine 5'-monophosphate (OMP) to uridine 5'-monophosphate (UMP). This is Orotidine 5'-phosphate decarboxylase from Wigglesworthia glossinidia brevipalpis.